The sequence spans 389 residues: Sterol methyltransferase-like 2 (389 aa).

The helical transmembrane segment at 25–45 (LSWKGAVGLVAATGIGYVLII) threads the bilayer.

This sequence belongs to the class I-like SAM-binding methyltransferase superfamily. Erg6/SMT family.

It is found in the microsome membrane. Unable to convert squalene, botryococcene, cycloartenol, zymosterol or lanosterol to mono-, di-, tri- or tetramethylated derivatives. This is Sterol methyltransferase-like 2 (SMT-2) from Botryococcus braunii (Green alga).